We begin with the raw amino-acid sequence, 748 residues long: Choline O-acetyltransferase (748 aa).

The segment covering 1–10 (MGLRTAKKRG) has biased composition (basic residues). The segment at 1–89 (MGLRTAKKRG…EWCGAASAEA (89 aa)) is disordered. The span at 17 to 32 (WKREEGGGTRGRREVR) shows a compositional bias: basic and acidic residues. Residues 40–53 (GGRGDPGDVGGPAG) are compositionally biased toward gly residues. 2 stretches are compositionally biased toward low complexity: residues 54–65 (NPGCSPHPRAAT) and 73–89 (HTPA…SAEA). A Phosphoserine modification is found at serine 125. Residue histidine 442 is the Proton acceptor of the active site. Serine 473 bears the Phosphoserine mark. CoA is bound by residues 520–532 (GKTF…CSPD), serine 558, and glutamine 659. Residues 727-748 (PTESKPLATKEKATRPSQGHQP) form a disordered region.

Belongs to the carnitine/choline acetyltransferase family.

The catalysed reaction is choline + acetyl-CoA = acetylcholine + CoA. Functionally, catalyzes the reversible synthesis of acetylcholine (ACh) from acetyl CoA and choline at cholinergic synapses. The polypeptide is Choline O-acetyltransferase (CHAT) (Homo sapiens (Human)).